A 768-amino-acid polypeptide reads, in one-letter code: Histone-lysine N-methyltransferase, H3 lysine-36 specific (768 aa).

The region spanning 45-90 is the AWS domain; it reads AEVMACDCKPGPTACDEDSGCINRLTSIECVRCCKGCQNKRFQGKK. One can recognise an SET domain in the interval 92–209; it reads ASVDVISTEK…RGEEVTFDYN (118 aa). One can recognise a Post-SET domain in the interval 216 to 232; sequence EAQACYCGEKNCVGFLG. A compositionally biased stretch (basic and acidic residues) spans 411-452; it reads KIDPDGDEHSVSRGTSEEVTKESSKSEEPNDVEVVKVNKKAD. 3 disordered regions span residues 411-508, 533-610, and 680-768; these read KIDP…KGWQ, KASR…VNAQ, and VVKR…IDLE. Positions 453–469 are enriched in polar residues; it reads NNGNGVTDSPSTRSESP. Positions 501 to 534 constitute a WW domain; the sequence is RSLPKGWQFANDPQGKVYYYNLELNIQQWDFPKA. 3 stretches are compositionally biased toward basic and acidic residues: residues 555 to 568, 682 to 734, and 755 to 768; these read NRRDERRDNSETRE, KRLE…KGEE, and TVKKPKVDMEIDLE.

It belongs to the class V-like SAM-binding methyltransferase superfamily. Histone-lysine methyltransferase family. SET2 subfamily.

Its subcellular location is the nucleus. The protein resides in the chromosome. It carries out the reaction L-lysyl(36)-[histone H3] + 3 S-adenosyl-L-methionine = N(6),N(6),N(6)-trimethyl-L-lysyl(36)-[histone H3] + 3 S-adenosyl-L-homocysteine + 3 H(+). Functionally, histone methyltransferase that trimethylates histone H3 'Lys-36' forming H3K36me3. Involved in transcription elongation as well as in transcription repression. In Yarrowia lipolytica (strain CLIB 122 / E 150) (Yeast), this protein is Histone-lysine N-methyltransferase, H3 lysine-36 specific (set-2).